The sequence spans 158 residues: Cyclic pyranopterin monophosphate synthase (158 aa).

Residues 75–77 (LCH) and 113–114 (ME) each bind substrate. Asp128 is an active-site residue.

Belongs to the MoaC family. As to quaternary structure, homohexamer; trimer of dimers.

The catalysed reaction is (8S)-3',8-cyclo-7,8-dihydroguanosine 5'-triphosphate = cyclic pyranopterin phosphate + diphosphate. It functions in the pathway cofactor biosynthesis; molybdopterin biosynthesis. Catalyzes the conversion of (8S)-3',8-cyclo-7,8-dihydroguanosine 5'-triphosphate to cyclic pyranopterin monophosphate (cPMP). The chain is Cyclic pyranopterin monophosphate synthase from Azorhizobium caulinodans (strain ATCC 43989 / DSM 5975 / JCM 20966 / LMG 6465 / NBRC 14845 / NCIMB 13405 / ORS 571).